Reading from the N-terminus, the 383-residue chain is 8-amino-7-oxononanoate synthase (383 aa).

Substrate is bound at residue R20. 107 to 108 (GY) serves as a coordination point for pyridoxal 5'-phosphate. H132 contributes to the substrate binding site. Pyridoxal 5'-phosphate contacts are provided by S178, H206, and T233. K236 bears the N6-(pyridoxal phosphate)lysine mark. Substrate is bound at residue T349.

This sequence belongs to the class-II pyridoxal-phosphate-dependent aminotransferase family. BioF subfamily. As to quaternary structure, homodimer. Pyridoxal 5'-phosphate serves as cofactor.

The catalysed reaction is 6-carboxyhexanoyl-[ACP] + L-alanine + H(+) = (8S)-8-amino-7-oxononanoate + holo-[ACP] + CO2. It functions in the pathway cofactor biosynthesis; biotin biosynthesis. Its function is as follows. Catalyzes the decarboxylative condensation of pimeloyl-[acyl-carrier protein] and L-alanine to produce 8-amino-7-oxononanoate (AON), [acyl-carrier protein], and carbon dioxide. In Chromobacterium violaceum (strain ATCC 12472 / DSM 30191 / JCM 1249 / CCUG 213 / NBRC 12614 / NCIMB 9131 / NCTC 9757 / MK), this protein is 8-amino-7-oxononanoate synthase.